We begin with the raw amino-acid sequence, 142 residues long: uncharacterized protein (142 aa).

Basic residues predominate over residues 1 to 14; it reads MKNVSPRRNKHYKS. The disordered stretch occupies residues 1–40; that stretch reads MKNVSPRRNKHYKSYKPQVPLKKPVLLPQHPPYRNRRKKK. Low complexity predominate over residues 16–28; the sequence is KPQVPLKKPVLLP.

This is an uncharacterized protein from Aquifex aeolicus (strain VF5).